The following is a 383-amino-acid chain: Delta(12)-fatty-acid desaturase (383 aa).

The segment at 1-24 (MGAGGRMPVPTSSKKSETDTTKRV) is disordered. A compositionally biased stretch (basic and acidic residues) spans 14–24 (KKSETDTTKRV). The helical transmembrane segment at 56 to 76 (LISDIIIASCFYYVATNYFSL) threads the bilayer. Residues 105-109 (HECGH) carry the Histidine box-1 motif. Residues 117 to 137 (WLDDTVGLIFHSFLLVPYFSW) form a helical membrane-spanning segment. The Histidine box-2 signature appears at 141–145 (HRRHH). A run of 3 helical transmembrane segments spans residues 179-199 (IMML…FNVS), 225-245 (IYLS…YAAA), and 252-272 (ICLY…ITYL). A Histidine box-3 motif is present at residues 315 to 319 (HVAHH).

The protein belongs to the fatty acid desaturase type 1 family. In terms of assembly, homo- and heterodimer. Interacts with FAD3 but not with FAD6. FAD2-FAD3 heterodimers can form a metabolic channel in which 18:1-PC is converted to 18:3-PC without releasing a free 18:2-PC intermediate. In terms of tissue distribution, expressed in shoots and roots. Expressed in leaves, stems, flowers and siliques.

The protein localises to the endoplasmic reticulum membrane. It is found in the microsome membrane. It carries out the reaction (9Z)-octadecenoyl-CoA + 2 Fe(II)-[cytochrome b5] + O2 + 2 H(+) = (9Z,12Z)-octadecadienoyl-CoA + 2 Fe(III)-[cytochrome b5] + 2 H2O. The catalysed reaction is (9Z)-hexadecenoyl-CoA + 2 Fe(II)-[cytochrome b5] + O2 + 2 H(+) = (9Z,12Z)-hexadecadienoyl-CoA + 2 Fe(III)-[cytochrome b5] + 2 H2O. It catalyses the reaction a (9Z)-octadecenoyl-containing glycerolipid + 2 Fe(II)-[cytochrome b5] + O2 + 2 H(+) = a (9Z,12Z)-octadecadienoyl-containing glycerolipid + 2 Fe(III)-[cytochrome b5] + 2 H2O. The enzyme catalyses (9Z)-octadecenoyl-CoA + AH2 + O2 = (9Z,12Z)-octadecadienoyl-CoA + A + 2 H2O. It carries out the reaction (9Z)-hexadecenoyl-CoA + AH2 + O2 = (9Z,12Z)-hexadecadienoyl-CoA + A + 2 H2O. The catalysed reaction is (9Z)-tetradecenoyl-CoA + 2 Fe(II)-[cytochrome b5] + O2 + 2 H(+) = (9Z,12Z)-tetradecadienoyl-CoA + 2 Fe(III)-[cytochrome b5] + 2 H2O. It catalyses the reaction (9Z)-pentadecenoyl-CoA + 2 Fe(II)-[cytochrome b5] + O2 + 2 H(+) = (9Z,12Z)-pentadecadienoyl-CoA + 2 Fe(III)-[cytochrome b5] + 2 H2O. The enzyme catalyses (9Z)-heptadecenoyl-CoA + 2 Fe(II)-[cytochrome b5] + O2 + 2 H(+) = (9Z,12Z)-heptadecadienoyl-CoA + 2 Fe(III)-[cytochrome b5] + 2 H2O. Its pathway is lipid metabolism; polyunsaturated fatty acid biosynthesis. In terms of biological role, ER (microsomal) omega-6 fatty acid desaturase introduces the second double bond in the biosynthesis of 18:3 fatty acids, important constituents of plant membranes. Delta(12)-desaturase with regioselectivity determined by the double bond (delta(9) position) and carboxyl group of the substrate. Can use both 16:1 and 18:1 fatty acids as substrates. It is thought to use cytochrome b5 as an electron donor and to act on fatty acids esterified to phosphatidylcholine (PC) and, possibly, other phospholipids. Very low constitutive hydroxylation activity. Required for desaturation of fatty acids present in extraplastidial membranes, including mitochondria. Required for salt tolerance during seed germination and early seedling growth. This is Delta(12)-fatty-acid desaturase from Arabidopsis thaliana (Mouse-ear cress).